We begin with the raw amino-acid sequence, 665 residues long: Ribonuclease R 2 (665 aa).

An RNB domain is found at 202–528 (REDYRNEITY…LIIHRLLHLY (327 aa)). The S1 motif domain maps to 579-662 (GEVYTGTITG…RKGTVDFEQI (84 aa)).

The protein belongs to the RNR ribonuclease family. RNase R subfamily.

It localises to the cytoplasm. It carries out the reaction Exonucleolytic cleavage in the 3'- to 5'-direction to yield nucleoside 5'-phosphates.. Functionally, 3'-5' exoribonuclease that releases 5'-nucleoside monophosphates and is involved in maturation of structured RNAs. The polypeptide is Ribonuclease R 2 (Lactococcus lactis subsp. lactis (strain IL1403) (Streptococcus lactis)).